The sequence spans 231 residues: MESSGKMESGAGQQPQPPQPFLPPAACFFATAAAAAAAAAAAAQSAQQQQPQAPPQQAPQLSPVADSQPSGGGHKSAAKQVKRQRSSSPELMRCKRRLNFSGFGYSLPQQQPAAVARRNERERNRVKLVNLGFATLREHVPNGAANKKMSKVETLRSAVEYIRALQQLLDEHDAVSAAFQAGVLSPTISPNYSNDLNSMAGSPVSSYSSDEGSYDPLSPEEQELLDFTNWF.

Disordered regions lie at residues 1–24 (MESSGKMESGAGQQPQPPQPFLPP) and 39–92 (AAAA…PELM). The span at 39–51 (AAAAAQSAQQQQP) shows a compositional bias: low complexity. Basic residues predominate over residues 76–85 (SAAKQVKRQR). Residues 113–165 (AAVARRNERERNRVKLVNLGFATLREHVPNGAANKKMSKVETLRSAVEYIRAL) enclose the bHLH domain. K151 is subject to N6-acetyllysine.

Efficient DNA binding requires dimerization with another bHLH protein. Forms a heterodimer with TCF3. In terms of tissue distribution, developing CNS and PNS at embryonic and postnatal stages. Expressed in the epithelium of glandular stomach.

Its subcellular location is the nucleus. Transcription factor that plays a key role in neuronal differentiation: acts as a pioneer transcription factor, accessing closed chromatin to allow other factors to bind and activate neural pathways. Directly binds the E box motif (5'-CANNTG-3') on promoters and promotes transcription of neuronal genes. The combination of three transcription factors, ASCL1, POU3F2/BRN2 and MYT1L, is sufficient to reprogram fibroblasts and other somatic cells into induced neuronal (iN) cells in vitro. Plays a role at early stages of development of specific neural lineages in most regions of the CNS, and of several lineages in the PNS. Essential for the generation of olfactory and autonomic neurons. Acts synergistically with FOXN4 to specify the identity of V2b neurons rather than V2a from bipotential p2 progenitors during spinal cord neurogenesis, probably through DLL4-NOTCH signaling activation. Involved in the regulation of neuroendocrine cell development in the glandular stomach. The protein is Achaete-scute homolog 1 of Mus musculus (Mouse).